The chain runs to 273 residues: Gamma-glutamyl cyclotransferase aclK (273 aa).

Belongs to the class-I pyridoxal-phosphate-dependent aminotransferase family.

The catalysed reaction is an alpha-(gamma-L-glutamyl)-L-amino acid = 5-oxo-L-proline + an L-alpha-amino acid. It participates in mycotoxin biosynthesis. Gamma-glutamyl cyclotransferase; part of the gene cluster that mediates the biosynthesis of aspirochlorine (or antibiotic A30641), an unusual halogenated spiro compound with distinctive antifungal properties due to selective inhibition of protein biosynthesis, and which is also active against bacteria, viruses, and murine tumor cells. The non-ribosomal peptide synthetase (NRPS) aclP is responsible the formation of the diketopiperazine (DKP) core from the condensation of 2 phenylalanine residues. One Phe residue is tailored into chlorotyrosine by hydroxylation and chlorination, whereas the second Phe undergoes an unprecedented C-C bond cleavage to be converted into glycine. After formation of the DKP, sulfur is incorporated into the DKP by conjugation with glutathione by aclG, followed by its stepwise degradation to the thiol by aclI, aclJ and aclK, and the dithiol oxidation by aclT. In addition, oxygenases (aclB, aclC, aclL and aclO) and O-methyltransferases (aclM and aclU) act as tailoring enzymes to produce the intermediate dechloroaspirochlorine. Ultimately, chlorination of dechloroaspirochlorine by the halogenase aclH is the last step in the aspirochlorine pathway. In Aspergillus oryzae (strain ATCC 42149 / RIB 40) (Yellow koji mold), this protein is Gamma-glutamyl cyclotransferase aclK.